Here is a 397-residue protein sequence, read N- to C-terminus: MAEGGVPLEKTAIGTYVPPAKPSLIGLSRAEMAERLAAIGIPREQRRMRVQQLWHWMYVRGARTFAEMTSVSKDMRAELEKHVTLDRPEVVAEQISSDGTRKWLLRLPSGDDLEKPHEVECVYIPETDRGTLCVSSQVGCTLNCSFCHTGTQRLVRNLTAGEIVGQIMVARDRLNDWADRETPHGNRLVTNIVMMGMGEPLYNFDAVRDGLLIVADNEGIGISKRRITLSTSGVVPNIVRAGEEIGVMLAISLHAVRDELRDELVPLNRKYPIAELMQACRDYPAASNAKRITFEYVMLKGVNDSLDDARRLVKLLNGIHAKINLIPFNPWPGTRYECSDWDQIEKFSEYVFNAGYSSPVRTPRGRDILAACGQLKSETEKLSARERQALRAMAMTD.

The Proton acceptor role is filled by glutamate 120. Positions 126-369 constitute a Radical SAM core domain; that stretch reads ETDRGTLCVS…VRTPRGRDIL (244 aa). Cysteine 133 and cysteine 372 are disulfide-bonded. Residues cysteine 140, cysteine 144, and cysteine 147 each contribute to the [4Fe-4S] cluster site. S-adenosyl-L-methionine-binding positions include 198-199, serine 230, 252-254, and asparagine 329; these read GE and SLH. Cysteine 372 functions as the S-methylcysteine intermediate in the catalytic mechanism.

It belongs to the radical SAM superfamily. RlmN family. It depends on [4Fe-4S] cluster as a cofactor.

The protein resides in the cytoplasm. It catalyses the reaction adenosine(2503) in 23S rRNA + 2 reduced [2Fe-2S]-[ferredoxin] + 2 S-adenosyl-L-methionine = 2-methyladenosine(2503) in 23S rRNA + 5'-deoxyadenosine + L-methionine + 2 oxidized [2Fe-2S]-[ferredoxin] + S-adenosyl-L-homocysteine. It carries out the reaction adenosine(37) in tRNA + 2 reduced [2Fe-2S]-[ferredoxin] + 2 S-adenosyl-L-methionine = 2-methyladenosine(37) in tRNA + 5'-deoxyadenosine + L-methionine + 2 oxidized [2Fe-2S]-[ferredoxin] + S-adenosyl-L-homocysteine. In terms of biological role, specifically methylates position 2 of adenine 2503 in 23S rRNA and position 2 of adenine 37 in tRNAs. m2A2503 modification seems to play a crucial role in the proofreading step occurring at the peptidyl transferase center and thus would serve to optimize ribosomal fidelity. The chain is Dual-specificity RNA methyltransferase RlmN from Nitrobacter winogradskyi (strain ATCC 25391 / DSM 10237 / CIP 104748 / NCIMB 11846 / Nb-255).